A 308-amino-acid polypeptide reads, in one-letter code: Porphobilinogen deaminase (308 aa).

Position 242 is an S-(dipyrrolylmethanemethyl)cysteine (Cys242).

This sequence belongs to the HMBS family. As to quaternary structure, monomer. The cofactor is dipyrromethane.

It carries out the reaction 4 porphobilinogen + H2O = hydroxymethylbilane + 4 NH4(+). The protein operates within porphyrin-containing compound metabolism; protoporphyrin-IX biosynthesis; coproporphyrinogen-III from 5-aminolevulinate: step 2/4. In terms of biological role, tetrapolymerization of the monopyrrole PBG into the hydroxymethylbilane pre-uroporphyrinogen in several discrete steps. This is Porphobilinogen deaminase from Alkalilimnicola ehrlichii (strain ATCC BAA-1101 / DSM 17681 / MLHE-1).